Consider the following 586-residue polypeptide: Zinc finger protein Eos (586 aa).

Disordered stretches follow at residues 1 to 42 (MHTP…APDF) and 68 to 98 (EKEFLGAPVGPSVSTPNSQHSSPSRSLSANS). Over residues 25 to 34 (QGKDNLEREL) the composition is skewed to basic and acidic residues. The span at 79–98 (SVSTPNSQHSSPSRSLSANS) shows a compositional bias: polar residues. A Glycyl lysine isopeptide (Lys-Gly) (interchain with G-Cter in SUMO2) cross-link involves residue K100. Residue S105 is modified to Phosphoserine. 4 consecutive C2H2-type zinc fingers follow at residues 159 to 181 (LKCDVCGMVCIGPNVLMVHKRSH), 187 to 209 (FHCNQCGASFTQKGNLLRHIKLH), 215 to 237 (FKCPFCNYACRRRDALTGHLRTH), and 248 to 271 (YKCNYCGRSYKQQSTLEEHKERCH). Residues 281-586 (AQALTGQPGD…HIVRGEHKVG (306 aa)) form an interaction with FOXP3 region. Residue K335 is modified to N6-acetyllysine. A disordered region spans residues 413–490 (RLELPGSREA…QPPPTIVVGR (78 aa)). The CTBP-binding motif PEDLG signature appears at 423-433 (GEGPEDLGDGG). The segment covering 476-485 (QGPPPQPPPT) has biased composition (pro residues). K501 is covalently cross-linked (Glycyl lysine isopeptide (Lys-Gly) (interchain with G-Cter in SUMO2)). C2H2-type zinc fingers lie at residues 531 to 553 (FKCEHCRILFLDHVMFTIHMGCH) and 559 to 583 (FECNICGYHSQDRYEFSSHIVRGEH).

Belongs to the Ikaros C2H2-type zinc-finger protein family. Self-associates. Interacts with other family members; IKZF1, IKZF2, IKZF3 and IKZF5. Interacts with CTBP2, SPI1 and MITF. Interacts with FOXP3 and CTBP1. In terms of tissue distribution, expressed mainly in the brain. Up-regulated in long term cultured astrocytes. Down-regulated during osteoclast differentiation.

Its subcellular location is the nucleus. Its function is as follows. DNA-binding protein that binds to the 5'GGGAATRCC-3' Ikaros-binding sequence. Interacts with SPI1 and MITF to repress transcription of the CTSK and ACP5 promoters via recruitment of corepressors SIN3A and CTBP2. May be involved in the development of central and peripheral nervous systems. Essential for the inhibitory function of regulatory T-cells (Treg). Mediates FOXP3-mediated gene silencing in regulatory T-cells (Treg) via recruitment of corepressor CTBP1. In Mus musculus (Mouse), this protein is Zinc finger protein Eos (Ikzf4).